The sequence spans 691 residues: Elongation factor G (691 aa).

The region spanning 8 to 282 (ERVRNIGIAA…AVIDYLPAPV (275 aa)) is the tr-type G domain. Residues 17–24 (AHIDAGKT), 81–85 (DTPGH), and 135–138 (NKMD) contribute to the GTP site.

The protein belongs to the TRAFAC class translation factor GTPase superfamily. Classic translation factor GTPase family. EF-G/EF-2 subfamily.

It localises to the cytoplasm. In terms of biological role, catalyzes the GTP-dependent ribosomal translocation step during translation elongation. During this step, the ribosome changes from the pre-translocational (PRE) to the post-translocational (POST) state as the newly formed A-site-bound peptidyl-tRNA and P-site-bound deacylated tRNA move to the P and E sites, respectively. Catalyzes the coordinated movement of the two tRNA molecules, the mRNA and conformational changes in the ribosome. This Synechococcus sp. (strain CC9605) protein is Elongation factor G.